An 843-amino-acid chain; its full sequence is Alpha-L-fucosidase 2 (843 aa).

An N-terminal signal peptide occupies residues 1–27; sequence MAEKSSFFVHFSCLLLLLTIIITCGEG. Asparagine 62, asparagine 253, asparagine 365, and asparagine 605 each carry an N-linked (GlcNAc...) asparagine glycan.

Belongs to the glycosyl hydrolase 95 family. In terms of tissue distribution, ubiquitous. Highest expression in vascular tissues, leaf trichomes, root elongation zone and emerging lateral roots.

It is found in the secreted. It localises to the extracellular space. Its subcellular location is the apoplast. The enzyme catalyses an alpha-L-fucoside + H2O = L-fucose + an alcohol. Hydrolyzes alpha-1,2-linked fucose. Also active on fucosylated xyloglucan oligosaccharides. No activity with 3-fucosyllactose, p-nitrophenyl-alpha-I-fucopyranoside, lacto-N-fucopentaose II, lacto-N-fucopentaose III or alpha 1,6-fucosylated chitopentaose. Involved in apoplastic xyloglucan metabolism. The chain is Alpha-L-fucosidase 2 (FUC95A) from Arabidopsis thaliana (Mouse-ear cress).